The sequence spans 104 residues: Transcription elongation factor A protein-like 9 (104 aa).

The span at 1–27 (MKSCQKMEGKPENESEPKHEEEPKPEE) shows a compositional bias: basic and acidic residues. The segment at 1 to 44 (MKSCQKMEGKPENESEPKHEEEPKPEEKPEEEEKLEEEAKAKGT) is disordered.

The protein belongs to the TFS-II family. TFA subfamily.

It is found in the nucleus. Its function is as follows. May be involved in transcriptional regulation. The sequence is that of Transcription elongation factor A protein-like 9 from Homo sapiens (Human).